Consider the following 204-residue polypeptide: High frequency lysogenization protein HflD homolog (204 aa).

This sequence belongs to the HflD family.

It is found in the cytoplasm. It localises to the cell inner membrane. In Shewanella woodyi (strain ATCC 51908 / MS32), this protein is High frequency lysogenization protein HflD homolog.